The primary structure comprises 294 residues: UDP-3-O-acyl-N-acetylglucosamine deacetylase (294 aa).

Zn(2+) contacts are provided by His-75, His-232, and Asp-236. The Proton donor role is filled by His-259.

Belongs to the LpxC family. Zn(2+) serves as cofactor.

It carries out the reaction a UDP-3-O-[(3R)-3-hydroxyacyl]-N-acetyl-alpha-D-glucosamine + H2O = a UDP-3-O-[(3R)-3-hydroxyacyl]-alpha-D-glucosamine + acetate. It participates in glycolipid biosynthesis; lipid IV(A) biosynthesis; lipid IV(A) from (3R)-3-hydroxytetradecanoyl-[acyl-carrier-protein] and UDP-N-acetyl-alpha-D-glucosamine: step 2/6. In terms of biological role, catalyzes the hydrolysis of UDP-3-O-myristoyl-N-acetylglucosamine to form UDP-3-O-myristoylglucosamine and acetate, the committed step in lipid A biosynthesis. The chain is UDP-3-O-acyl-N-acetylglucosamine deacetylase from Campylobacter jejuni subsp. doylei (strain ATCC BAA-1458 / RM4099 / 269.97).